We begin with the raw amino-acid sequence, 303 residues long: Aliphatic sulfonates import ATP-binding protein SsuB (303 aa).

One can recognise an ABC transporter domain in the interval 39-263 (LHVRQVVKRY…ERGAAGFAQL (225 aa)). Residue 71 to 78 (GRSGCGKS) coordinates ATP.

Belongs to the ABC transporter superfamily. Aliphatic sulfonates importer (TC 3.A.1.17.2) family. The complex is composed of two ATP-binding proteins (SsuB), two transmembrane proteins (SsuC) and a solute-binding protein (SsuA).

The protein resides in the cell inner membrane. The enzyme catalyses ATP + H2O + aliphatic sulfonate-[sulfonate-binding protein]Side 1 = ADP + phosphate + aliphatic sulfonateSide 2 + [sulfonate-binding protein]Side 1.. Part of the ABC transporter complex SsuABC involved in aliphatic sulfonates import. Responsible for energy coupling to the transport system. This chain is Aliphatic sulfonates import ATP-binding protein SsuB, found in Cupriavidus necator (strain ATCC 17699 / DSM 428 / KCTC 22496 / NCIMB 10442 / H16 / Stanier 337) (Ralstonia eutropha).